Here is a 654-residue protein sequence, read N- to C-terminus: DNA ligase (654 aa).

NAD(+) is bound by residues 31–35 (DSEYD), 80–81 (SL), and glutamate 109. Catalysis depends on lysine 111, which acts as the N6-AMP-lysine intermediate. Arginine 132, glutamate 166, lysine 280, and lysine 304 together coordinate NAD(+). Positions 398, 401, 416, and 421 each coordinate Zn(2+). Residues 579–654 (NIEGILSGKT…IWSEQDLLDL (76 aa)) form the BRCT domain.

The protein belongs to the NAD-dependent DNA ligase family. LigA subfamily. The cofactor is Mg(2+). It depends on Mn(2+) as a cofactor.

It carries out the reaction NAD(+) + (deoxyribonucleotide)n-3'-hydroxyl + 5'-phospho-(deoxyribonucleotide)m = (deoxyribonucleotide)n+m + AMP + beta-nicotinamide D-nucleotide.. In terms of biological role, DNA ligase that catalyzes the formation of phosphodiester linkages between 5'-phosphoryl and 3'-hydroxyl groups in double-stranded DNA using NAD as a coenzyme and as the energy source for the reaction. It is essential for DNA replication and repair of damaged DNA. This Lactococcus lactis subsp. lactis (strain IL1403) (Streptococcus lactis) protein is DNA ligase.